Here is a 132-residue protein sequence, read N- to C-terminus: Small ribosomal subunit protein uS8 (132 aa).

Belongs to the universal ribosomal protein uS8 family. In terms of assembly, part of the 30S ribosomal subunit. Contacts proteins S5 and S12.

One of the primary rRNA binding proteins, it binds directly to 16S rRNA central domain where it helps coordinate assembly of the platform of the 30S subunit. The sequence is that of Small ribosomal subunit protein uS8 from Geobacter sp. (strain M21).